The sequence spans 126 residues: uncharacterized protein (126 aa).

Composition is skewed to basic residues over residues 21 to 31 (RKKRKKRKKRR) and 41 to 83 (RILK…RKRR). Residues 21 to 83 (RKKRKKRKKR…RSPRKRRKRR (63 aa)) are disordered.

This is an uncharacterized protein from Saccharomyces cerevisiae (strain ATCC 204508 / S288c) (Baker's yeast).